The sequence spans 328 residues: DNA-directed RNA polymerase subunit alpha 2 (328 aa).

Residues 1–234 (MQGSVIEFLK…EQLDAFVDLR (234 aa)) form an alpha N-terminal domain (alpha-NTD) region. Residues 248–328 (FDPILLRPVD…NWPPASLSED (81 aa)) are alpha C-terminal domain (alpha-CTD).

The protein belongs to the RNA polymerase alpha chain family. In terms of assembly, homodimer. The RNAP catalytic core consists of 2 alpha, 1 beta, 1 beta' and 1 omega subunit. When a sigma factor is associated with the core the holoenzyme is formed, which can initiate transcription.

The enzyme catalyses RNA(n) + a ribonucleoside 5'-triphosphate = RNA(n+1) + diphosphate. Functionally, DNA-dependent RNA polymerase catalyzes the transcription of DNA into RNA using the four ribonucleoside triphosphates as substrates. This chain is DNA-directed RNA polymerase subunit alpha 2, found in Psychromonas ingrahamii (strain DSM 17664 / CCUG 51855 / 37).